The following is a 505-amino-acid chain: Putative ribose/galactose/methyl galactoside import ATP-binding protein 1 (505 aa).

ABC transporter domains follow at residues 10–245 (LRLE…VGRS) and 256–501 (RPTD…SGYG). An ATP-binding site is contributed by 42-49 (GENGAGKS).

This sequence belongs to the ABC transporter superfamily. Carbohydrate importer 2 (CUT2) (TC 3.A.1.2) family.

Its subcellular location is the cell inner membrane. The enzyme catalyses D-ribose(out) + ATP + H2O = D-ribose(in) + ADP + phosphate + H(+). It catalyses the reaction D-galactose(out) + ATP + H2O = D-galactose(in) + ADP + phosphate + H(+). Functionally, part of an ABC transporter complex involved in carbohydrate import. Could be involved in ribose, galactose and/or methyl galactoside import. Responsible for energy coupling to the transport system. This Agrobacterium fabrum (strain C58 / ATCC 33970) (Agrobacterium tumefaciens (strain C58)) protein is Putative ribose/galactose/methyl galactoside import ATP-binding protein 1.